Here is a 400-residue protein sequence, read N- to C-terminus: Protein phosphatase methylesterase 1 (400 aa).

Residues 32-70 (DENDGDALGSLPSFNGQSNRNRKYTGKTGSTTDRISSKE) form a disordered region. Residues 114–365 (PIFIFHHGAG…DSGHFIQEDS (252 aa)) form the AB hydrolase-1 domain. Catalysis depends on residues serine 205, aspartate 233, and histidine 359.

Belongs to the AB hydrolase superfamily. Interacts with and inactivates the phosphatase PP2A-like catalytic subunits PPG1, PPH21, PPH22, PPH3 and SIT4.

It carries out the reaction [phosphatase 2A protein]-C-terminal L-leucine methyl ester + H2O = [phosphatase 2A protein]-C-terminal L-leucine + methanol + H(+). Demethylates proteins that have been reversibly carboxymethylated. Demethylates the phosphatase PP2A catalytic subunits PPH21 and PPH22. Forms inactive complexes (PP2Ai) with phosphatase PP2A-like catalytic subunits. Involved in the regulation of cell cycle progression at START. The polypeptide is Protein phosphatase methylesterase 1 (PPE1) (Saccharomyces cerevisiae (strain ATCC 204508 / S288c) (Baker's yeast)).